A 121-amino-acid polypeptide reads, in one-letter code: Large ribosomal subunit protein bL12 (121 aa).

Belongs to the bacterial ribosomal protein bL12 family. Homodimer. Part of the ribosomal stalk of the 50S ribosomal subunit. Forms a multimeric L10(L12)X complex, where L10 forms an elongated spine to which 2 to 4 L12 dimers bind in a sequential fashion. Binds GTP-bound translation factors.

Forms part of the ribosomal stalk which helps the ribosome interact with GTP-bound translation factors. Is thus essential for accurate translation. This is Large ribosomal subunit protein bL12 from Aliivibrio salmonicida (strain LFI1238) (Vibrio salmonicida (strain LFI1238)).